A 452-amino-acid polypeptide reads, in one-letter code: Imaginal disk growth factor 6 (452 aa).

A signal peptide spans 1 to 18 (MIIKALAIVSLCLASIQA). One can recognise a GH18 domain in the interval 29 to 452 (KHLVCYYDSA…LRAIKYRLTN (424 aa)). Cys33 and Cys60 are joined by a disulfide. Asn233 is a glycosylation site (N-linked (GlcNAc...) asparagine). A disulfide bond links Cys352 and Cys435.

This sequence belongs to the glycosyl hydrolase 18 family. IDGF subfamily. Glycosylated. As to expression, in larvae, it is expressed in the fat body and by hemocytes.

It localises to the secreted. In terms of biological role, probably required to stimulate the proliferation, polarization and motility of imaginal disk cells. May act by stabilizing the binding of insulin-like peptides to its receptor through a simultaneous interaction with both molecules to form a multiprotein signaling complex. The polypeptide is Imaginal disk growth factor 6 (Drosophila melanogaster (Fruit fly)).